We begin with the raw amino-acid sequence, 155 residues long: 17.6 kDa class II heat shock protein (155 aa).

Positions Asp-38–Ala-155 constitute a sHSP domain.

The protein belongs to the small heat shock protein (HSP20) family. In terms of assembly, may form oligomeric structures.

The protein resides in the cytoplasm. In Arabidopsis thaliana (Mouse-ear cress), this protein is 17.6 kDa class II heat shock protein (HSP17.6).